The primary structure comprises 117 residues: Large ribosomal subunit protein uL18 (117 aa).

It belongs to the universal ribosomal protein uL18 family. As to quaternary structure, part of the 50S ribosomal subunit; part of the 5S rRNA/L5/L18/L25 subcomplex. Contacts the 5S and 23S rRNAs.

Its function is as follows. This is one of the proteins that bind and probably mediate the attachment of the 5S RNA into the large ribosomal subunit, where it forms part of the central protuberance. The chain is Large ribosomal subunit protein uL18 from Francisella tularensis subsp. tularensis (strain FSC 198).